We begin with the raw amino-acid sequence, 162 residues long: Transcriptional repressor NrdR (162 aa).

The interval 1-21 is disordered; it reads MNCPDCGDEQTRVIDTETSAD. The segment at 3 to 34 is a zinc-finger region; sequence CPDCGDEQTRVIDTETSADGTSVRRRRECQRC. The ATP-cone domain maps to 49-139; sequence LQVKKRNGTI…VYKAFSEPQE (91 aa).

It belongs to the NrdR family. Zn(2+) is required as a cofactor.

Functionally, negatively regulates transcription of bacterial ribonucleotide reductase nrd genes and operons by binding to NrdR-boxes. The sequence is that of Transcriptional repressor NrdR from Halorubrum lacusprofundi (strain ATCC 49239 / DSM 5036 / JCM 8891 / ACAM 34).